The chain runs to 28 residues: Potassium channel toxin kappa-KTx 2.9 (28 aa).

Intrachain disulfides connect C4/C22 and C8/C18.

The protein belongs to the short scorpion toxin superfamily. Potassium channel inhibitor family. Gamma-KTx 2 subfamily. In terms of processing, contains 2 disulfide bonds. As to expression, expressed by the venom gland.

Its subcellular location is the secreted. Reversibly blocks voltage-gated potassium channels Kv1.2/KCNA2 and Kv1.3/KCNA3. This is Potassium channel toxin kappa-KTx 2.9 from Pandinus imperator (Emperor scorpion).